A 394-amino-acid polypeptide reads, in one-letter code: NAD(P)H-quinone oxidoreductase subunit H (394 aa).

This sequence belongs to the complex I 49 kDa subunit family. As to quaternary structure, NDH-1 can be composed of about 15 different subunits; different subcomplexes with different compositions have been identified which probably have different functions.

It localises to the cellular thylakoid membrane. The enzyme catalyses a plastoquinone + NADH + (n+1) H(+)(in) = a plastoquinol + NAD(+) + n H(+)(out). The catalysed reaction is a plastoquinone + NADPH + (n+1) H(+)(in) = a plastoquinol + NADP(+) + n H(+)(out). Its function is as follows. NDH-1 shuttles electrons from an unknown electron donor, via FMN and iron-sulfur (Fe-S) centers, to quinones in the respiratory and/or the photosynthetic chain. The immediate electron acceptor for the enzyme in this species is believed to be plastoquinone. Couples the redox reaction to proton translocation, and thus conserves the redox energy in a proton gradient. Cyanobacterial NDH-1 also plays a role in inorganic carbon-concentration. This chain is NAD(P)H-quinone oxidoreductase subunit H, found in Trichodesmium erythraeum (strain IMS101).